Here is a 301-residue protein sequence, read N- to C-terminus: GTP cyclohydrolase FolE2 (301 aa).

The protein belongs to the GTP cyclohydrolase IV family.

It carries out the reaction GTP + H2O = 7,8-dihydroneopterin 3'-triphosphate + formate + H(+). It participates in cofactor biosynthesis; 7,8-dihydroneopterin triphosphate biosynthesis; 7,8-dihydroneopterin triphosphate from GTP: step 1/1. Functionally, converts GTP to 7,8-dihydroneopterin triphosphate. This Pseudomonas syringae pv. syringae (strain B728a) protein is GTP cyclohydrolase FolE2.